The following is a 389-amino-acid chain: Galactokinase (389 aa).

Residue 33–36 (EHTD) coordinates substrate. Residues Ser67 and 124-130 (GAGLSSS) contribute to the ATP site. Mg(2+) contacts are provided by Ser130 and Glu162. Asp174 functions as the Proton acceptor in the catalytic mechanism. Tyr224 contacts substrate.

The protein belongs to the GHMP kinase family. GalK subfamily.

It is found in the cytoplasm. The enzyme catalyses alpha-D-galactose + ATP = alpha-D-galactose 1-phosphate + ADP + H(+). The protein operates within carbohydrate metabolism; galactose metabolism. Catalyzes the transfer of the gamma-phosphate of ATP to D-galactose to form alpha-D-galactose-1-phosphate (Gal-1-P). The polypeptide is Galactokinase (Fusobacterium nucleatum subsp. nucleatum (strain ATCC 25586 / DSM 15643 / BCRC 10681 / CIP 101130 / JCM 8532 / KCTC 2640 / LMG 13131 / VPI 4355)).